The chain runs to 120 residues: C-C motif chemokine 27 (120 aa).

The signal sequence occupies residues 1–25 (MMEGLSPASSLPLLLLLLSPAPEAA). 2 disulfide bridges follow: Cys34–Cys63 and Cys35–Cys78.

Belongs to the intercrine beta (chemokine CC) family. Monomer, dimer, and tetramer. Heparin avidly promotes oligomerization. Interacts with TNFAIP6 (via Link domain). As to expression, isoform 1 is predominantly expressed in placenta and weakly in skin. Isoform 2 is predominantly expressed in testes and brain, weakly in kidney and liver and even lower in heart and muscle. Low expression of both isoforms in other tissues.

The protein resides in the secreted. The protein localises to the nucleus. Chemotactic factor that attracts skin-associated memory T-lymphocytes. May play a role in mediating homing of lymphocytes to cutaneous sites. May play a role in cell migration during embryogenesis. Nuclear forms may facilitate cellular migration by inducing cytoskeletal relaxation. Binds to CCR10. This Mus musculus (Mouse) protein is C-C motif chemokine 27 (Ccl27).